The following is a 478-amino-acid chain: Putative multidrug resistance outer membrane protein MdtQ (478 aa).

The N-terminal stretch at 1–21 (MNRDSFYPAIACFPLLLMLAG) is a signal peptide. Residue Cys22 is the site of N-palmitoyl cysteine attachment. A lipid anchor (S-diacylglycerol cysteine) is attached at Cys22.

Belongs to the outer membrane factor (OMF) (TC 1.B.17) family.

The protein resides in the cell outer membrane. Its function is as follows. Could be involved in resistance to puromycin, acriflavine and tetraphenylarsonium chloride. The protein is Putative multidrug resistance outer membrane protein MdtQ (mdtQ) of Escherichia coli (strain K12).